We begin with the raw amino-acid sequence, 449 residues long: Aminopeptidase C (449 aa).

Residues Cys70, His364, and Asn385 contribute to the active site.

Belongs to the peptidase C1 family. Homohexamer.

Its subcellular location is the cytoplasm. The enzyme catalyses Inactivates bleomycin B2 (a cytotoxic glycometallopeptide) by hydrolysis of a carboxyamide bond of beta-aminoalanine, but also shows general aminopeptidase activity. The specificity varies somewhat with source, but amino acid arylamides of Met, Leu and Ala are preferred.. The sequence is that of Aminopeptidase C (pepC) from Lactobacillus helveticus (Lactobacillus suntoryeus).